Here is a 225-residue protein sequence, read N- to C-terminus: tRNA (guanine-N(1)-)-methyltransferase (225 aa).

Residues G112 and 132 to 137 (IGDYVL) each bind S-adenosyl-L-methionine.

The protein belongs to the RNA methyltransferase TrmD family. Homodimer.

It is found in the cytoplasm. It carries out the reaction guanosine(37) in tRNA + S-adenosyl-L-methionine = N(1)-methylguanosine(37) in tRNA + S-adenosyl-L-homocysteine + H(+). In terms of biological role, specifically methylates guanosine-37 in various tRNAs. This Bacteroides thetaiotaomicron (strain ATCC 29148 / DSM 2079 / JCM 5827 / CCUG 10774 / NCTC 10582 / VPI-5482 / E50) protein is tRNA (guanine-N(1)-)-methyltransferase.